We begin with the raw amino-acid sequence, 208 residues long: Protein-L-isoaspartate O-methyltransferase (208 aa).

Residue S59 is part of the active site.

It belongs to the methyltransferase superfamily. L-isoaspartyl/D-aspartyl protein methyltransferase family.

The protein resides in the cytoplasm. It catalyses the reaction [protein]-L-isoaspartate + S-adenosyl-L-methionine = [protein]-L-isoaspartate alpha-methyl ester + S-adenosyl-L-homocysteine. In terms of biological role, catalyzes the methyl esterification of L-isoaspartyl residues in peptides and proteins that result from spontaneous decomposition of normal L-aspartyl and L-asparaginyl residues. It plays a role in the repair and/or degradation of damaged proteins. The chain is Protein-L-isoaspartate O-methyltransferase from Photorhabdus laumondii subsp. laumondii (strain DSM 15139 / CIP 105565 / TT01) (Photorhabdus luminescens subsp. laumondii).